Reading from the N-terminus, the 901-residue chain is HTH-type transcriptional regulator MalT (901 aa).

39-46 (SPAGYGKT) provides a ligand contact to ATP. Residues 829-894 (ELIRTSPLTQ…DAVQHAQQLL (66 aa)) form the HTH luxR-type domain. The H-T-H motif DNA-binding region spans 853–872 (NEQIAGELAVAATTIKTHIR).

It belongs to the MalT family. As to quaternary structure, monomer in solution. Oligomerizes to an active state in the presence of the positive effectors ATP and maltotriose.

With respect to regulation, activated by ATP and maltotriose, which are both required for DNA binding. In terms of biological role, positively regulates the transcription of the maltose regulon whose gene products are responsible for uptake and catabolism of malto-oligosaccharides. Specifically binds to the promoter region of its target genes, recognizing a short DNA motif called the MalT box. The protein is HTH-type transcriptional regulator MalT of Salmonella typhi.